Reading from the N-terminus, the 62-residue chain is uncharacterized protein (62 aa).

4Fe-4S ferredoxin-type domains lie at 2–31 (AVTIDYSLCKGAECAECVNNCPMEVFEIEG) and 32–62 (DKVVVARPDDCTYCGVCEDVCPTGAVKVEPE). Positions 10, 15, 18, 22, 42, 45, 48, and 52 each coordinate [4Fe-4S] cluster.

Requires [4Fe-4S] cluster as cofactor.

This is an uncharacterized protein from Methanocaldococcus jannaschii (strain ATCC 43067 / DSM 2661 / JAL-1 / JCM 10045 / NBRC 100440) (Methanococcus jannaschii).